The primary structure comprises 440 residues: Probable pectate lyase 10 (440 aa).

Residues 1 to 28 (MVIFSRSFLALSTTLIILALCINSSTMA) form the signal peptide. Residues 32-56 (EDLNSHSSSNSSTANKLPNDDGAWN) are disordered. N-linked (GlcNAc...) asparagine glycosylation is found at Asn-41 and Asn-76. Asp-238, Asp-262, and Asp-266 together coordinate Ca(2+). Residue Arg-318 is part of the active site.

Belongs to the polysaccharide lyase 1 family. Ca(2+) serves as cofactor.

The enzyme catalyses Eliminative cleavage of (1-&gt;4)-alpha-D-galacturonan to give oligosaccharides with 4-deoxy-alpha-D-galact-4-enuronosyl groups at their non-reducing ends.. The protein operates within glycan metabolism; pectin degradation; 2-dehydro-3-deoxy-D-gluconate from pectin: step 2/5. The protein is Probable pectate lyase 10 of Arabidopsis thaliana (Mouse-ear cress).